The primary structure comprises 461 residues: Propionyl-CoA carboxylase regulator (461 aa).

One can recognise an HTH cro/C1-type domain in the interval 11-65; that stretch reads LRELRVKLGLTQKVFAERLGASLPYLNQMENNHRPVSATVVLALAQEFGVDVTKL. The H-T-H motif DNA-binding region spans 22-41; sequence QKVFAERLGASLPYLNQMEN.

It belongs to the short-chain fatty acyl-CoA assimilation regulator (ScfR) family.

Its function is as follows. Transcriptional regulator that controls propionyl-CoA assimilation through the methylmalonyl-CoA pathway via regulation of pccB expression. The protein is Propionyl-CoA carboxylase regulator of Cereibacter sphaeroides (strain ATCC 17023 / DSM 158 / JCM 6121 / CCUG 31486 / LMG 2827 / NBRC 12203 / NCIMB 8253 / ATH 2.4.1.) (Rhodobacter sphaeroides).